A 428-amino-acid polypeptide reads, in one-letter code: Serine--tRNA ligase (428 aa).

L-serine is bound at residue 231-233; sequence TAE. Residue 262–264 coordinates ATP; sequence RSE. Glutamate 285 contacts L-serine. Residue 349 to 352 coordinates ATP; it reads EISS. Serine 385 lines the L-serine pocket.

Belongs to the class-II aminoacyl-tRNA synthetase family. Type-1 seryl-tRNA synthetase subfamily. As to quaternary structure, homodimer. The tRNA molecule binds across the dimer.

It localises to the cytoplasm. It catalyses the reaction tRNA(Ser) + L-serine + ATP = L-seryl-tRNA(Ser) + AMP + diphosphate + H(+). The catalysed reaction is tRNA(Sec) + L-serine + ATP = L-seryl-tRNA(Sec) + AMP + diphosphate + H(+). It participates in aminoacyl-tRNA biosynthesis; selenocysteinyl-tRNA(Sec) biosynthesis; L-seryl-tRNA(Sec) from L-serine and tRNA(Sec): step 1/1. In terms of biological role, catalyzes the attachment of serine to tRNA(Ser). Is also able to aminoacylate tRNA(Sec) with serine, to form the misacylated tRNA L-seryl-tRNA(Sec), which will be further converted into selenocysteinyl-tRNA(Sec). This chain is Serine--tRNA ligase, found in Staphylococcus aureus (strain MW2).